The primary structure comprises 421 residues: Gamma-glutamyl phosphate reductase (421 aa).

This sequence belongs to the gamma-glutamyl phosphate reductase family.

The protein resides in the cytoplasm. The catalysed reaction is L-glutamate 5-semialdehyde + phosphate + NADP(+) = L-glutamyl 5-phosphate + NADPH + H(+). Its pathway is amino-acid biosynthesis; L-proline biosynthesis; L-glutamate 5-semialdehyde from L-glutamate: step 2/2. In terms of biological role, catalyzes the NADPH-dependent reduction of L-glutamate 5-phosphate into L-glutamate 5-semialdehyde and phosphate. The product spontaneously undergoes cyclization to form 1-pyrroline-5-carboxylate. The chain is Gamma-glutamyl phosphate reductase from Ruegeria sp. (strain TM1040) (Silicibacter sp.).